The sequence spans 181 residues: Transcriptional repressor NrdR (181 aa).

A zinc finger spans residues 3–34; that stretch reads CPFCRHPDSRVVDSREAEEGSAIRRRRSCLSC. The ATP-cone domain maps to 46–136; sequence LQVRKRSGAA…VYLAFESLTD (91 aa). Residues 148–181 form a disordered region; sequence AAGPPTTRDGPARPVPRGAVDVSPVIGTQQVHSR.

It belongs to the NrdR family. Zn(2+) is required as a cofactor.

Negatively regulates transcription of bacterial ribonucleotide reductase nrd genes and operons by binding to NrdR-boxes. The polypeptide is Transcriptional repressor NrdR (Frankia casuarinae (strain DSM 45818 / CECT 9043 / HFP020203 / CcI3)).